The sequence spans 177 residues: Large ribosomal subunit protein uL6 (177 aa).

Belongs to the universal ribosomal protein uL6 family. As to quaternary structure, part of the 50S ribosomal subunit.

This protein binds to the 23S rRNA, and is important in its secondary structure. It is located near the subunit interface in the base of the L7/L12 stalk, and near the tRNA binding site of the peptidyltransferase center. This is Large ribosomal subunit protein uL6 from Stutzerimonas stutzeri (strain A1501) (Pseudomonas stutzeri).